The chain runs to 346 residues: Very-long-chain 3-oxoacyl-CoA reductase (346 aa).

Residues 23–43 (AAWIVFGLGISKMVFLTLNFS) traverse the membrane as a helical segment. NADP(+) contacts are provided by Val69, Asp123, Asn150, Tyr222, Lys226, Val255, and Ser257. Tyr222 functions as the Proton donor in the catalytic mechanism. The active-site Lowers pKa of active site Tyr is Lys226.

This sequence belongs to the short-chain dehydrogenases/reductases (SDR) family.

The protein localises to the endoplasmic reticulum membrane. It carries out the reaction a very-long-chain (3R)-3-hydroxyacyl-CoA + NADP(+) = a very-long-chain 3-oxoacyl-CoA + NADPH + H(+). Its pathway is lipid metabolism; fatty acid biosynthesis. Functionally, component of the microsomal membrane bound fatty acid elongation system, which produces the 26-carbon very long-chain fatty acids (VLCFA) from palmitate. Catalyzes the reduction of the 3-ketoacyl-CoA intermediate that is formed in each cycle of fatty acid elongation. VLCFAs serve as precursors for ceramide and sphingolipids. In Kluyveromyces lactis (strain ATCC 8585 / CBS 2359 / DSM 70799 / NBRC 1267 / NRRL Y-1140 / WM37) (Yeast), this protein is Very-long-chain 3-oxoacyl-CoA reductase.